The following is an 89-amino-acid chain: Small ribosomal subunit protein uS15 (89 aa).

This sequence belongs to the universal ribosomal protein uS15 family. Part of the 30S ribosomal subunit. Forms a bridge to the 50S subunit in the 70S ribosome, contacting the 23S rRNA.

Its function is as follows. One of the primary rRNA binding proteins, it binds directly to 16S rRNA where it helps nucleate assembly of the platform of the 30S subunit by binding and bridging several RNA helices of the 16S rRNA. Functionally, forms an intersubunit bridge (bridge B4) with the 23S rRNA of the 50S subunit in the ribosome. This Bartonella tribocorum (strain CIP 105476 / IBS 506) protein is Small ribosomal subunit protein uS15.